We begin with the raw amino-acid sequence, 230 residues long: 2,3-bisphosphoglycerate-dependent phosphoglycerate mutase (230 aa).

Residues 8–15, 21–22, arginine 60, 87–90, lysine 98, 114–115, and 183–184 contribute to the substrate site; these read RHGESEWN, TG, ERHY, RR, and GN. Histidine 9 acts as the Tele-phosphohistidine intermediate in catalysis. The active-site Proton donor/acceptor is the glutamate 87.

The protein belongs to the phosphoglycerate mutase family. BPG-dependent PGAM subfamily.

It catalyses the reaction (2R)-2-phosphoglycerate = (2R)-3-phosphoglycerate. It participates in carbohydrate degradation; glycolysis; pyruvate from D-glyceraldehyde 3-phosphate: step 3/5. In terms of biological role, catalyzes the interconversion of 2-phosphoglycerate and 3-phosphoglycerate. The sequence is that of 2,3-bisphosphoglycerate-dependent phosphoglycerate mutase from Streptococcus pneumoniae (strain ATCC BAA-255 / R6).